Consider the following 763-residue polypeptide: Protein translocase subunit SecA 2 (763 aa).

ATP is bound by residues glutamine 83, 101–105, and aspartate 490; that span reads GEGKT.

Belongs to the SecA family. As to quaternary structure, monomer and homodimer. Part of the essential Sec protein translocation apparatus which comprises SecA, SecYEG and auxiliary proteins SecDF. Other proteins may also be involved.

Its subcellular location is the cell membrane. It localises to the cytoplasm. It carries out the reaction ATP + H2O + cellular proteinSide 1 = ADP + phosphate + cellular proteinSide 2.. Functionally, part of the Sec protein translocase complex. Interacts with the SecYEG preprotein conducting channel. Has a central role in coupling the hydrolysis of ATP to the transfer of proteins into and across the cell membrane, serving as an ATP-driven molecular motor driving the stepwise translocation of polypeptide chains across the membrane. This Corynebacterium efficiens (strain DSM 44549 / YS-314 / AJ 12310 / JCM 11189 / NBRC 100395) protein is Protein translocase subunit SecA 2.